A 23-amino-acid polypeptide reads, in one-letter code: Phospholipase A1 verutoxin-1 (23 aa).

The protein belongs to the AB hydrolase superfamily. Lipase family. In terms of processing, contains six disulfide bonds. In terms of tissue distribution, expressed by the venom gland.

The protein resides in the secreted. It catalyses the reaction a 1,2-diacyl-sn-glycero-3-phosphocholine + H2O = a 2-acyl-sn-glycero-3-phosphocholine + a fatty acid + H(+). It carries out the reaction 1-(9Z-octadecenoyl)-2-hexadecanoyl-sn-glycero-3-phosphocholine + H2O = 2-hexadecanoyl-sn-glycero-3-phosphocholine + (9Z)-octadecenoate + H(+). The catalysed reaction is a 1-acyl-sn-glycero-3-phosphocholine + H2O = sn-glycerol 3-phosphocholine + a fatty acid + H(+). It functions in the pathway phospholipid metabolism. Activity is maximal in the presence of calcium. However, unlike phospholipases A2 whose catalytic activity is strictly calcium-dependent, this enzyme shows considerable catalytic activity on phosphatidylcholine emulsified in calcium free solution; the catalytic activity of VT-1 assayed in the absence of calcium ions is 18-20% of that assayed in solution containing calcium ions. Catalyzes the hydrolysis of glycerophospholipids such as phosphatidylcholine (1,2-diacyl-sn-glycero-3-phosphocholine) and has a moderate activity to hydrolyze lysoglycerophospholipids such as lysophosphatidylcholine (1-acyl-sn-glycero-3-phosphocholine), but is unable to hydrolyze sphingomyelin. Liberates the fatty acid from the sn-1 position of 1,2-diacyl-sn-glycero-3-phosphocholine mainly, indicating phospholipase activity of the A1 type. In addition to acting as an allergen, it possesses a moderate hemolytic activity on red blood cells of mice (3% of hemolysis at 3.0 ug/ml). The protein is Phospholipase A1 verutoxin-1 of Vespa velutina (Asian yellow-legged hornet).